A 671-amino-acid polypeptide reads, in one-letter code: DNA ligase (671 aa).

NAD(+)-binding positions include 32–36 (DAEYD), 81–82 (SL), and Glu-113. Residue Lys-115 is the N6-AMP-lysine intermediate of the active site. Residues Arg-136, Glu-173, Lys-290, and Lys-314 each contribute to the NAD(+) site. Zn(2+) is bound by residues Cys-408, Cys-411, Cys-426, and Cys-432. The BRCT domain occupies 593-671 (EIDSPFAGKT…ETEMLRLLGS (79 aa)).

It belongs to the NAD-dependent DNA ligase family. LigA subfamily. Mg(2+) is required as a cofactor. Requires Mn(2+) as cofactor.

It catalyses the reaction NAD(+) + (deoxyribonucleotide)n-3'-hydroxyl + 5'-phospho-(deoxyribonucleotide)m = (deoxyribonucleotide)n+m + AMP + beta-nicotinamide D-nucleotide.. In terms of biological role, DNA ligase that catalyzes the formation of phosphodiester linkages between 5'-phosphoryl and 3'-hydroxyl groups in double-stranded DNA using NAD as a coenzyme and as the energy source for the reaction. It is essential for DNA replication and repair of damaged DNA. This chain is DNA ligase, found in Escherichia coli O1:K1 / APEC.